The sequence spans 88 residues: Phosphocarrier protein HPr (88 aa).

Residues 1 to 88 (MEQQSYTIID…DVLSKEGLTE (88 aa)) form the HPr domain. Catalysis depends on His-15, which acts as the Pros-phosphohistidine intermediate. Ser-46 is subject to Phosphoserine; by HPrK/P.

Belongs to the HPr family.

The protein resides in the cytoplasm. Its activity is regulated as follows. Phosphorylation on Ser-46 inhibits the phosphoryl transfer from enzyme I to HPr. General (non sugar-specific) component of the phosphoenolpyruvate-dependent sugar phosphotransferase system (sugar PTS). This major carbohydrate active-transport system catalyzes the phosphorylation of incoming sugar substrates concomitantly with their translocation across the cell membrane. The phosphoryl group from phosphoenolpyruvate (PEP) is transferred to the phosphoryl carrier protein HPr by enzyme I. Phospho-HPr then transfers it to the PTS EIIA domain. Functionally, P-Ser-HPr interacts with the catabolite control protein A (CcpA), forming a complex that binds to DNA at the catabolite response elements cre, operator sites preceding a large number of catabolite-regulated genes. Thus, P-Ser-HPr is a corepressor in carbon catabolite repression (CCR), a mechanism that allows bacteria to coordinate and optimize the utilization of available carbon sources. P-Ser-HPr also plays a role in inducer exclusion, in which it probably interacts with several non-PTS permeases and inhibits their transport activity. This is Phosphocarrier protein HPr (ptsH) from Staphylococcus carnosus.